Reading from the N-terminus, the 778-residue chain is Phenylalanine--tRNA ligase beta subunit (778 aa).

In terms of domain architecture, tRNA-binding spans 39 to 150 (YEVPQKIVFG…GKYKIGEEVS (112 aa)). Positions 391 to 467 (HEDKIISLNK…RLVGIDNIPS (77 aa)) constitute a B5 domain. Mg(2+)-binding residues include aspartate 445, aspartate 451, glutamate 454, and glutamate 455. An FDX-ACB domain is found at 686–778 (SKYQASFRDL…LKNQLGVGIR (93 aa)).

Belongs to the phenylalanyl-tRNA synthetase beta subunit family. Type 1 subfamily. In terms of assembly, tetramer of two alpha and two beta subunits. Mg(2+) serves as cofactor.

The protein resides in the cytoplasm. The catalysed reaction is tRNA(Phe) + L-phenylalanine + ATP = L-phenylalanyl-tRNA(Phe) + AMP + diphosphate + H(+). This chain is Phenylalanine--tRNA ligase beta subunit, found in Sulfurimonas denitrificans (strain ATCC 33889 / DSM 1251) (Thiomicrospira denitrificans (strain ATCC 33889 / DSM 1251)).